The following is a 222-amino-acid chain: Probable glutathione-independent glyoxalase hsp3104 (222 aa).

Residues Cys-124, His-125, and Glu-155 contribute to the active site.

This sequence belongs to the peptidase C56 family. HSP31-like subfamily.

The protein localises to the cytoplasm. The enzyme catalyses methylglyoxal + H2O = (R)-lactate + H(+). Its function is as follows. Catalyzes the conversion of methylglyoxal (MG) to D-lactate in a single glutathione (GSH)-independent step. May play a role in detoxifying endogenously produced glyoxals. Involved in protection against reactive oxygen species (ROS). The chain is Probable glutathione-independent glyoxalase hsp3104 from Schizosaccharomyces pombe (strain 972 / ATCC 24843) (Fission yeast).